We begin with the raw amino-acid sequence, 700 residues long: MNPIVKSFEYGQHTVTLETGVIARQADAAVLASMGDTTVLVTVVGKKEADAGRDFFPLTVNYQEKTYAAGKIPGGFFKREGRPSEDETLIARLIDRPIRPLFPNGFKNEVQVIITVVSVDPQIEPDIISMIGTSAALAISGIPFSGPLGAARVGYIDGEYVLNPSVAQLATSQLNLVVAGTAGAVLMVESEAQALPEEVMLGSVVYGHDQQQVVIKAIAEFKAEAGKPTWDWTAPTQDADLVAQIKELAEAGLGDAYKIQVKQDRYAQVSVVKAATKEALLASNPSIDLREVDNLLGSLEKKVVRGRIIRGEPRIDGREPDMIRALSVLAGVLPRTHGSALFTRGETQALVTCTLGTERDAQKIDSIMGERTNRFMLHYNFPPYSVGETGMVGSPKRREIGHGKLAWRGINAVMPSAAEFPYSVRVVSEITESNGSSSMASVCGTSLALMDAGVPIKTSVAGIAMGLVKEGDDFVVLSDILGDEDHLGDMDFKVAGTRDGITALQMDIKIEGITKEIMDIALQQAYGARVHILNVMDQAIGSHRDDISDHAPRITVIKINPEKIRDVIGKGGAVIRALTEETGTTIELEDDGTVKIASSNGEATKEAIRRIEEITSEVEVGRIYNGKVIRIVDFGAFVNILPGKDGLVHISQISDERVANVSDHLELNQEVAVKVMEVDRQGRVRLSIKEAQTKETAAAE.

Mg(2+) contacts are provided by aspartate 485 and aspartate 491. Positions 552–611 (PRITVIKINPEKIRDVIGKGGAVIRALTEETGTTIELEDDGTVKIASSNGEATKEAIRRI) constitute a KH domain. In terms of domain architecture, S1 motif spans 621-689 (GRIYNGKVIR…RQGRVRLSIK (69 aa)).

Belongs to the polyribonucleotide nucleotidyltransferase family. As to quaternary structure, component of the RNA degradosome, which is a multiprotein complex involved in RNA processing and mRNA degradation. It depends on Mg(2+) as a cofactor.

It is found in the cytoplasm. It carries out the reaction RNA(n+1) + phosphate = RNA(n) + a ribonucleoside 5'-diphosphate. Involved in mRNA degradation. Catalyzes the phosphorolysis of single-stranded polyribonucleotides processively in the 3'- to 5'-direction. The sequence is that of Polyribonucleotide nucleotidyltransferase from Shewanella baltica (strain OS155 / ATCC BAA-1091).